Reading from the N-terminus, the 54-residue chain is Light-harvesting protein B-880 beta chain (54 aa).

The Cytoplasmic segment spans residues 1 to 20 (AEDRSSLSGVSDAEAKEFHA). The a bacteriochlorophyll site is built by His19 and His37. Residues 21–43 (LFVSSFMGFMVVAVLAHVLAWAW) form a helical membrane-spanning segment. Over 44–54 (RPWIPGPKGWA) the chain is Periplasmic.

The protein belongs to the antenna complex beta subunit family. The core complex is formed by different alpha and beta chains, binding bacteriochlorophyll molecules, and arranged most probably in tetrameric structures disposed around the reaction center. The non-pigmented gamma chains may constitute additional components.

It is found in the cell inner membrane. Functionally, antenna complexes are light-harvesting systems, which transfer the excitation energy to the reaction centers. The chain is Light-harvesting protein B-880 beta chain from Rhodoblastus acidophilus (Rhodopseudomonas acidophila).